The chain runs to 325 residues: Lipid droplet-associated hydrolase (325 aa).

Residue Ser-139 is the Nucleophile of the active site. Catalysis depends on charge relay system residues Asp-271 and His-300.

This sequence belongs to the AB hydrolase superfamily. LDAH family. Present in macrophage-rich areas in atherosclerotic lesions (at protein level). Expressed in monocytes and monocyte-derived macrophages (at protein level).

It localises to the lipid droplet. Its subcellular location is the endoplasmic reticulum. The enzyme catalyses a cholesterol ester + H2O = cholesterol + a fatty acid + H(+). Its function is as follows. Probable serine lipid hydrolase associated with lipid droplets. Has low cholesterol esterase activity. Appears to lack triglyceride lipase activity. Involved in cholesterol and triglyceride homeostasis; has opposing effects, stimulating cellular triglyceride accumulation and cellular cholesterol release. Acts antagonistically with PNPLA2/ATGL in regulation of cellular lipid stores. May regulate triglyceride accumulation indirectly through stimulation of PNPLA2/ATGL ubiquitination and proteasomal degradation. Promotes microtubule-dependent lipid droplet fusion. Highly expressed in macrophage-rich areas in atherosclerotic lesions, suggesting that it could promote cholesterol ester turnover in macrophages. This Homo sapiens (Human) protein is Lipid droplet-associated hydrolase.